Reading from the N-terminus, the 657-residue chain is MSIRDLYHARASPFISLEFFPPKTELGTRNLMERMHRMTALDPLFITVTWGAGGTTAEKTLTLASLAQQTLNIPVCMHLTCTNTEKAIIDDALDRCYNAGIRNILALRGDPPIGEDWLDSQSNESPFKYAVDLVRYIKQSYGDKFCVGVAAYPEGHCEGEAEGHEQDPLKDLVYLKEKVEAGADFVITQLFYDVEKFLTFEMLFRERISQDLPLFPGLMPINSYLLFHRAAKLSHASIPPAILSRFPPEIQSDDNAVKSIGVDILIELIQEIYQRTSGRIKGFHFYTLNLEKAIAQIVSQSPVLSHIVNESSEEEGEDETSGEIGSIENVPIEDADGDIVLDDSNEETVANRKRRRHSSLDSAKLIFNRAIVTEKGLRYNNENGSMPSKKALISISKGHGTLGRDATWDEFPNGRFGDSRSPAYGEIDGYGPSIKVSKSKALELWGIPKTIGDLKDIFIKYLEGSTDAIPWSDLGLSAETALIQEELIQLNYRGYLTLASQPATNATLSSDKIFGWGPAKGRLYQKAFVEMFIHRQQWETTLKPKLDHYGRRKFSYYAGDSSGSFETNLDPHSSSVVTWGVFPNSPVKQTTIIEEESFKAWRDEAFSIWSEWAKLFPRNTPANILLRLVHKDYCLVSIVHHDFKETDELWEMLLDQA.

Glu-18 (proton donor/acceptor) is an active-site residue. Residues 18–23 and 49–50 contribute to the NAD(+) site; these read EFFPPK and TW. FAD is bound by residues 49–50, His-78, and 108–110; these read TW and RGD. Asp-110 contributes to the substrate binding site. Ser-120 carries the post-translational modification Phosphoserine. FAD is bound by residues 129–130, Tyr-152, Asp-171, and Lys-178; that span reads YA. Positions 189 and 286 each coordinate substrate. Ser-301 is subject to Phosphoserine. A disordered region spans residues 308-329; that stretch reads VNESSEEEGEDETSGEIGSIEN. The segment covering 311–321 has biased composition (acidic residues); sequence SSEEEGEDETS. Ser-358 carries the phosphoserine modification.

Belongs to the methylenetetrahydrofolate reductase family. FAD serves as cofactor.

It carries out the reaction (6S)-5-methyl-5,6,7,8-tetrahydrofolate + NADP(+) = (6R)-5,10-methylene-5,6,7,8-tetrahydrofolate + NADPH + H(+). It catalyses the reaction (6S)-5-methyl-5,6,7,8-tetrahydrofolate + NAD(+) = (6R)-5,10-methylene-5,6,7,8-tetrahydrofolate + NADH + H(+). It participates in one-carbon metabolism; tetrahydrofolate interconversion. In Saccharomyces cerevisiae (strain ATCC 204508 / S288c) (Baker's yeast), this protein is Methylenetetrahydrofolate reductase 1 (MET12).